A 137-amino-acid chain; its full sequence is Large ribosomal subunit protein uL16 (137 aa).

A compositionally biased stretch (basic residues) spans 1-13; the sequence is MLQPSRRKYRKEQ. The segment at 1–22 is disordered; it reads MLQPSRRKYRKEQKGRNTGLAT.

Belongs to the universal ribosomal protein uL16 family. As to quaternary structure, part of the 50S ribosomal subunit.

Its function is as follows. Binds 23S rRNA and is also seen to make contacts with the A and possibly P site tRNAs. The sequence is that of Large ribosomal subunit protein uL16 from Azoarcus sp. (strain BH72).